The primary structure comprises 382 residues: MNYYSINLAKAHLLNYPCPLNINFLWNYGFLLGIIFFIQILTGVFLASRYTPEISYAYYSIQHILRELWSGWCFRYMHATGASLVFLLTYLHILRGLNYSYLYLPLSWISGLIIFALFIVTAFIGYVLPWGQMSYWGATVITNLLSSIPVLVIWLCGGYTVSDPTIKRFFVLHFILPFVALCIVFIHIFFLHLHGSTNPLGYDTALKIPFYPNLLSLDVKGFNNIFILFLLQSIFGIIPLSHPDNAILVNTYVTPIQIVPEWYFLPFYAMLKTIPSKTAGLLIVLASLQLLFLLAEQRSLTTIIQFKMTFGAREYSVPMIWFMCSFYALLWIGCQLPQDIFILYGRLFIISFFSSGLFALVHYKRTHYDYSSQANIKITRLR.

The next 4 membrane-spanning stretches (helical) occupy residues 28–48 (YGFL…FLAS), 72–94 (WCFR…LHIL), 107–127 (SWIS…IGYV), and 169–189 (FFVL…IHIF). Heme b contacts are provided by H78 and H92. 2 residues coordinate heme b: H173 and H187. H192 contacts a ubiquinone. 4 helical membrane-spanning segments follow: residues 214–234 (LLSL…LQSI), 274–294 (IPSK…LFLL), 317–337 (VPMI…CQLP), and 340–360 (IFIL…LFAL).

The protein belongs to the cytochrome b family. As to quaternary structure, the main subunits of complex b-c1 are: cytochrome b, cytochrome c1 and the Rieske protein. It depends on heme b as a cofactor.

The protein localises to the mitochondrion inner membrane. In terms of biological role, component of the ubiquinol-cytochrome c reductase complex (complex III or cytochrome b-c1 complex) that is part of the mitochondrial respiratory chain. The b-c1 complex mediates electron transfer from ubiquinol to cytochrome c. Contributes to the generation of a proton gradient across the mitochondrial membrane that is then used for ATP synthesis. The chain is Cytochrome b (MT-CYB) from Plasmodium vivax (strain Salvador I).